The sequence spans 376 residues: MNHSERFVFIAEWYDPNASLLRRYELLFYPGDGSVEMHDVKNHRTFLKRTKYDNLHLEDLFIGNKVNVFSRQLVLIDYGDQYTARQLGSRKEKTLALIKPDAISKAGEIIEIINKAGFTITKLKMMMLSRKEALDFHVDHQSRPFFNELIQFITTGPIIAMEILRDDAICEWKRLLGPANSGVARTDASESIRALFGTDGIRNAAHGPDSFASAAREMELFFPSSGGCGPANTAKFTNCTCCIVKPHAVSEGLLGKILMAIRDAGFEISAMQMFNMDRVNVEEFYEVYKGVVTEYHDMVTEMYSGPCVAMEIQQNNATKTFREFCGPADPEIARHLRPGTLRAIFGKTKIQNAVHCTDLPEDGLLEVQYFFKILDN.

The DM10 domain maps to His-3–Lys-91.

This sequence belongs to the NDK family. As to quaternary structure, component of sperm flagellar doublet microtubules. Component of the gamma-tubulin ring complex. In terms of processing, undergoes autophosphorylation. As to expression, expressed in airway epithelial cells.

Its subcellular location is the cytoplasm. The protein localises to the cytoskeleton. It localises to the microtubule organizing center. The protein resides in the centrosome. It is found in the nucleus. Its subcellular location is the spindle. The protein localises to the cilium axoneme. It localises to the flagellum axoneme. The protein resides in the cell projection. It is found in the cilium. Its function is as follows. Possesses an intrinsic kinase activity. Displays 3'-5' exonuclease activity with a preference for single-stranded DNA. Does not seem to have nucleoside diphosphate kinase activity. Functional component of the gamma-tubulin ring complex, implicated in the regulation of the microtubule-nucleating activity of the gamma-tubulin ring complex in centrosomes, in a kinase activity-dependent manner. Part of the dynein-decorated doublet microtubules (DMTs) in cilia axoneme, which is required for motile cilia beating. In Homo sapiens (Human), this protein is Nucleoside diphosphate kinase homolog 7.